The following is a 294-amino-acid chain: Nucleoside-specific channel-forming protein Tsx (294 aa).

A signal peptide spans 1–22; that stretch reads MKKTLLAAGAVVALSTTFAAGA.

Belongs to the nucleoside-specific channel-forming outer membrane porin (Tsx) (TC 1.B.10) family.

It localises to the cell outer membrane. Functions as a substrate-specific channel for nucleosides and deoxynucleosides. Also functions in albicidin uptake and as receptor for colicin K. Also is a receptor for several Tsx-specific bacteriophages. The protein is Nucleoside-specific channel-forming protein Tsx of Klebsiella pneumoniae.